The following is a 373-amino-acid chain: 3 beta-hydroxysteroid dehydrogenase/Delta 5--&gt;4-isomerase type 1 (373 aa).

NADP(+) is bound by residues 10–15, tyrosine 155, and lysine 159; that span reads GAGGFL. Lysine 159 functions as the Proton donor in the catalytic mechanism. A helical transmembrane segment spans residues 288–308; the sequence is VALLYWLGFLLELVSFLLRPV.

Belongs to the 3-beta-HSD family. In terms of tissue distribution, high levels in adrenal gland, kidney and male liver. Low levels in female liver.

It is found in the endoplasmic reticulum membrane. The protein localises to the mitochondrion membrane. The catalysed reaction is a 3beta-hydroxy-Delta(5)-steroid + NAD(+) = a 3-oxo-Delta(5)-steroid + NADH + H(+). It carries out the reaction pregnenolone + NAD(+) = pregn-5-ene-3,20-dione + NADH + H(+). The enzyme catalyses 3beta-hydroxyandrost-5-en-17-one + NAD(+) = androst-5-ene-3,17-dione + NADH + H(+). It catalyses the reaction androst-5-en-3beta,17beta-diol + NAD(+) = 17beta-hydroxy-androst-5-en-3-one + NADH + H(+). The catalysed reaction is a 3beta-hydroxysteroid + NADP(+) = a 3-oxosteroid + NADPH + H(+). It carries out the reaction 5alpha-androstane-3beta,17beta-diol + NADP(+) = 17beta-hydroxy-5alpha-androstan-3-one + NADPH + H(+). The enzyme catalyses 3beta-hydroxy-5alpha-androstan-17-one + NADP(+) = 5alpha-androstan-3,17-dione + NADPH + H(+). It catalyses the reaction a 3-oxo-Delta(5)-steroid = a 3-oxo-Delta(4)-steroid. The catalysed reaction is pregn-5-ene-3,20-dione = progesterone. It carries out the reaction androst-5-ene-3,17-dione = androst-4-ene-3,17-dione. The enzyme catalyses 17beta-hydroxy-androst-5-en-3-one = testosterone. It catalyses the reaction 5alpha-androstane-3beta,17beta-diol + NAD(+) = 17beta-hydroxy-5alpha-androstan-3-one + NADH + H(+). The protein operates within steroid hormone biosynthesis. It functions in the pathway steroid metabolism. A bifunctional enzyme responsible for the oxidation and isomerization of 3beta-hydroxy-Delta(5)-steroid precursors to 3-oxo-Delta(4)-steroids, an essential step in steroid hormone biosynthesis. Specifically catalyzes the conversion of pregnenolone to progesterone, 17alpha-hydroxypregnenolone to 17alpha-hydroxyprogesterone, dehydroepiandrosterone (DHEA) to 4-androstenedione, and androstenediol to testosterone. Additionally, catalyzes the interconversion between 3beta-hydroxy and 3-oxo-5alpha-androstane steroids controlling the bioavalability of the active forms. Specifically converts dihydrotestosterone to its inactive form 5alpha-androstanediol, that does not bind androgen receptor/AR. Also converts androstanedione, a precursor of testosterone and estrone, to epiandrosterone. Expected to use NAD(+) as preferred electron donor for the 3-beta-hydroxy-steroid dehydrogenase activity and NADPH for the 3-ketosteroid reductase activity. This is 3 beta-hydroxysteroid dehydrogenase/Delta 5--&gt;4-isomerase type 1 (HSD3B1) from Mesocricetus auratus (Golden hamster).